A 377-amino-acid chain; its full sequence is Opsin-5 (377 aa).

Residues 1–33 (MALNHTALPQDERLPHYLRDEDPFASKLSWEAD) lie on the Extracellular side of the membrane. N-linked (GlcNAc...) asparagine glycosylation occurs at Asn4. The helical transmembrane segment at 34–54 (LVAGFYLTIIGILSTFGNGYV) threads the bilayer. At 55-74 (LYMSSRRKKKLRPAEIMTIN) the chain is on the cytoplasmic side. The helical transmembrane segment at 75–95 (LAVCDLGISVVGKPFTIISCF) threads the bilayer. The Extracellular portion of the chain corresponds to 96 to 108 (CHRWVFGWFGCRW). Residues Cys106 and Cys183 are joined by a disulfide bond. The helical transmembrane segment at 109–129 (YGWAGFFFGCGSLITMTAVSL) threads the bilayer. The Cytoplasmic portion of the chain corresponds to 130 to 150 (DRYLKICYLSYGVWLKRKHAY). Residues 151–171 (ICLAVIWAYASFWTTMPLVGL) form a helical membrane-spanning segment. Residues 172–197 (GDYAPEPFGTSCTLDWWLAQASGGGQ) lie on the Extracellular side of the membrane. The helical transmembrane segment at 198 to 218 (VFILSILFFCLLLPTAVIVFS) threads the bilayer. Over 219 to 252 (YAKIIAKVKSSSKEVAHFDSRIHSSHVLEVKLTK) the chain is Cytoplasmic. A helical transmembrane segment spans residues 253–273 (VAMLICAGFLIAWIPYAVVSV). Residues 274–288 (WSAFGRPDSIPIQLS) are Extracellular-facing. A helical membrane pass occupies residues 289–309 (VVPTLLAKSAAMYNPIIYQVI). Lys296 bears the N6-(retinylidene)lysine mark. Over 310–377 (DYRFACCQAG…HSNDGDCGKK (68 aa)) the chain is Cytoplasmic. Residues Cys315 and Cys316 are each lipidated (S-palmitoyl cysteine). The segment at 357 to 377 (FTSAHVMDGESHSNDGDCGKK) is disordered. Positions 363–377 (MDGESHSNDGDCGKK) are enriched in basic and acidic residues.

The protein belongs to the G-protein coupled receptor 1 family. Opsin subfamily. Post-translationally, it is uncertain whether Cys-315 or Cys-316 is palmitoylated. In terms of tissue distribution, expressed in the brain (at protein level). Weakly expressed in the skin and liver (at protein level). Abundantly expressed in striated muscle cells. Expressed in Math7/Atok7-dependent retinal ganglion cells in the ganglion cell layer (at protein level). Additionally expressed in horizontal and amacrine cells in the inner nuclear layer of the retina (at protein level). Expressed around the base of hair follicles and in epidermal and sebaceous gland cells of the outer ear (at protein level). Abundantly expressed in vibrissae hair follicles and weakly expressed in the vibrissae skin pad, dorsal back skin, and tail.

The protein resides in the cell membrane. G-protein coupled receptor which selectively activates G(i) type G proteins via ultraviolet A (UVA) light-mediated activation in the retina. Preferentially binds the chromophore 11-cis retinal and is a bistable protein that displays emission peaks at 380 nm (UVA light) and 470 nm (blue light). Required for the light-response in the inner plexiform layer, and contributes to the regulation of the light-response in the nerve fiber layer, via phosphorylated DAT/SLC6A3 dopamine uptake. Involved in local corneal and retinal circadian rhythm photoentrainment via modulation of the UVA light-induced phase-shift of the retina clock. Acts as a circadian photoreceptor in the outer ear and vibrissal pads, via modulation of circadian clock-gene expression in response to violet light during the light-to-dark transition phase and night phase of the circadian cycle. Required in the retina to negatively regulate hyaloid vessel regression during postnatal development via light-dependent OPN5-SLC32A1-DRD2-VEGFR2 signaling. Involved in the light-dependent regulation of retina and vitreous compartment dopamine levels. The sequence is that of Opsin-5 (Opn5) from Mus musculus (Mouse).